Reading from the N-terminus, the 218-residue chain is Deoxyribose-phosphate aldolase (218 aa).

Catalysis depends on Asp-92, which acts as the Proton donor/acceptor. The active-site Schiff-base intermediate with acetaldehyde is Lys-155. The Proton donor/acceptor role is filled by Lys-184.

It belongs to the DeoC/FbaB aldolase family. DeoC type 1 subfamily.

It is found in the cytoplasm. It catalyses the reaction 2-deoxy-D-ribose 5-phosphate = D-glyceraldehyde 3-phosphate + acetaldehyde. It participates in carbohydrate degradation; 2-deoxy-D-ribose 1-phosphate degradation; D-glyceraldehyde 3-phosphate and acetaldehyde from 2-deoxy-alpha-D-ribose 1-phosphate: step 2/2. Its function is as follows. Catalyzes a reversible aldol reaction between acetaldehyde and D-glyceraldehyde 3-phosphate to generate 2-deoxy-D-ribose 5-phosphate. The chain is Deoxyribose-phosphate aldolase from Clostridium kluyveri (strain NBRC 12016).